We begin with the raw amino-acid sequence, 412 residues long: Alpha-ketoglutarate-dependent sulfonate dioxygenase (412 aa).

Ser-52 bears the Phosphoserine mark. Residues His-218 and Asp-220 each coordinate Fe cation. 2-oxoglutarate is bound by residues Thr-245 and Trp-352. Residue His-367 participates in Fe cation binding. 2 residues coordinate 2-oxoglutarate: Arg-379 and Arg-383.

It belongs to the TfdA dioxygenase family. The cofactor is Fe(2+).

It participates in organosulfur degradation; alkanesulfonate degradation. Its function is as follows. Acts as an alpha-ketoglutarate-dependent dioxygenase active on sulfonates. Although taurine is a poor substrate, a variety of other sulfonates are utilized, with the best natural substrates being isethionate and taurocholate. The chain is Alpha-ketoglutarate-dependent sulfonate dioxygenase (JLP1) from Saccharomyces cerevisiae (strain ATCC 204508 / S288c) (Baker's yeast).